The primary structure comprises 1237 residues: Tyrosine-protein kinase sid-3 (1237 aa).

The 263-residue stretch at 107–369 folds into the Protein kinase domain; that stretch reads IKLYELIGEG…REDLVAAMFL (263 aa). Residues 113 to 121 and K139 each bind ATP; that span reads IGEGSFAVV. Residue D230 is the Proton acceptor of the active site. The SH3 domain maps to 366–426; the sequence is AMFLDAVARE…PRSVVFAQTN (61 aa). 6 disordered regions span residues 683–704, 741–802, 826–919, 940–986, 999–1018, and 1134–1156; these read NQGSSTGNGVRPRPASSIGIQN, PPAP…APVQ, IQPQ…EERR, SNST…SEPI, SATTSQAKPVTQPIRHPSPP, and QQRQAGSSSRAVPPASASTSAAS. Composition is skewed to polar residues over residues 749 to 766, 778 to 791, and 847 to 863; these read QPVSSQRVAQQQQNTLQK, KRPTGTTAPPSNGF, and SAPTHSNVAPTTSSQAS. 2 stretches are compositionally biased toward low complexity: residues 881–910 and 940–961; these read TPITVAPVHAAPTTSAPSTSVVTRRPTSTT and SNSTSSLPSAAVSTASSVPSTA. The segment covering 1138-1156 has biased composition (low complexity); it reads AGSSSRAVPPASASTSAAS.

The protein belongs to the protein kinase superfamily. Tyr protein kinase family. SYK/ZAP-70 subfamily. In terms of tissue distribution, ubiquitously present in all tissues tested. Expressed in the somatic cells of gut, pharynx, body wall muscle, neurons, skin and excretory canal cells.

Its subcellular location is the cytoplasm. The catalysed reaction is L-tyrosyl-[protein] + ATP = O-phospho-L-tyrosyl-[protein] + ADP + H(+). Functionally, tyrosine-protein kinase which plays a role in RNA-mediated gene silencing by mediating import of double-stranded RNA (dsRNA) into cells. Not required for import of ingested dsRNA into intestinal cells but involved in subsequent export from intestinal cells to internal tissues. This is Tyrosine-protein kinase sid-3 (sid-3) from Caenorhabditis elegans.